We begin with the raw amino-acid sequence, 32 residues long: Hainantoxin F8-35.23 (32 aa).

Expressed by the venom gland.

The protein resides in the secreted. This Cyriopagopus hainanus (Chinese bird spider) protein is Hainantoxin F8-35.23.